A 1132-amino-acid chain; its full sequence is Mediator of RNA polymerase II transcription subunit 5 (1132 aa).

Positions 998-1023 (KGDVDIKGEDLHEKNDSAEVRQETQP) are enriched in basic and acidic residues. A disordered region spans residues 998-1070 (KGDVDIKGED…RTNNVPMIKA (73 aa)). Acidic residues predominate over residues 1047–1057 (YEEEEENEDND).

It belongs to the Mediator complex subunit 5 family. Component of the Mediator complex, which is composed of at least 21 subunits that form three structurally distinct submodules. The Mediator head module contains MED6, MED8, MED11, SRB4/MED17, SRB5/MED18, ROX3/MED19, SRB2/MED20 and SRB6/MED22, the middle module contains MED1, MED4, NUT1/MED5, MED7, CSE2/MED9, NUT2/MED10, SRB7/MED21 and SOH1/MED31, and the tail module contains MED2, PGD1/MED3, RGR1/MED14, GAL11/MED15 and SIN4/MED16. The head and the middle modules interact directly with RNA polymerase II, whereas the elongated tail module interacts with gene-specific regulatory proteins.

It is found in the nucleus. Its function is as follows. Component of the Mediator complex, a coactivator involved in the regulated transcription of nearly all RNA polymerase II-dependent genes. Mediator functions as a bridge to convey information from gene-specific regulatory proteins to the basal RNA polymerase II transcription machinery. The Mediator complex, having a compact conformation in its free form, is recruited to promoters by direct interactions with regulatory proteins and serves for the assembly of a functional preinitiation complex with RNA polymerase II and the general transcription factors. The Mediator complex unfolds to an extended conformation and partially surrounds RNA polymerase II, specifically interacting with the unphosphorylated form of the C-terminal domain (CTD) of RNA polymerase II. The Mediator complex dissociates from the RNA polymerase II holoenzyme and stays at the promoter when transcriptional elongation begins. In Saccharomyces cerevisiae (strain ATCC 204508 / S288c) (Baker's yeast), this protein is Mediator of RNA polymerase II transcription subunit 5 (NUT1).